The sequence spans 861 residues: 1,4-alpha-glucan-branching enzyme (861 aa).

(1,4-alpha-D-glucosyl)n contacts are provided by tryptophan 173 and lysine 208. Aspartate 429 functions as the Nucleophile in the catalytic mechanism. Glutamate 484 functions as the Proton donor in the catalytic mechanism.

The protein belongs to the glycosyl hydrolase 13 family. GlgB subfamily. As to quaternary structure, monomer.

It localises to the plastid. The protein resides in the chloroplast. The protein localises to the amyloplast. It carries out the reaction Transfers a segment of a (1-&gt;4)-alpha-D-glucan chain to a primary hydroxy group in a similar glucan chain.. It functions in the pathway glycan biosynthesis; starch biosynthesis. Its function is as follows. Catalyzes the formation of the alpha-1,6-glucosidic linkages in starch by scission of a 1,4-alpha-linked oligosaccharide from growing alpha-1,4-glucan chains and the subsequent attachment of the oligosaccharide to the alpha-1,6 position. This is 1,4-alpha-glucan-branching enzyme (SBE1) from Solanum tuberosum (Potato).